A 171-amino-acid polypeptide reads, in one-letter code: uncharacterized protein (171 aa).

This is an uncharacterized protein from Haemophilus influenzae (strain ATCC 51907 / DSM 11121 / KW20 / Rd).